The sequence spans 65 residues: Large ribosomal subunit protein bL33c (65 aa).

Belongs to the bacterial ribosomal protein bL33 family.

It is found in the plastid. Its subcellular location is the chloroplast. The polypeptide is Large ribosomal subunit protein bL33c (rpl33) (Porphyra purpurea (Red seaweed)).